A 449-amino-acid chain; its full sequence is Chlorobenzene dioxygenase subunit alpha (449 aa).

The region spanning Trp54–Ala163 is the Rieske domain. Residues Cys96, His98, Cys116, and His119 each coordinate [2Fe-2S] cluster. Fe cation-binding residues include His222, His228, and Asp376.

The protein belongs to the bacterial ring-hydroxylating dioxygenase alpha subunit family. As to quaternary structure, this dioxygenase system consists of four proteins: the two subunits of the oxygenase component (TecA1 and TecA2), a ferredoxin (TecA3) and a ferredoxin reductase (TecA4). It depends on [2Fe-2S] cluster as a cofactor. The cofactor is Fe cation.

It carries out the reaction chlorobenzene + NADH + O2 + H(+) = (1R,2R)-3-chlorocyclohexa-3,5-diene-1,2-diol + NAD(+). It functions in the pathway aromatic compound metabolism. Functionally, part of the oxygenase component of the chlorobenzene dioxygenase system that catalyzes the dihydroxylation of a range of aromatic compounds, including chlorinated benzenes and toluenes, and dinuclear aromatics such as biphenyl and dibenzo-p-dioxin. The alpha subunit is responsible for substrate specificity. This Cupriavidus sp. (strain PS12) protein is Chlorobenzene dioxygenase subunit alpha.